A 408-amino-acid chain; its full sequence is MEEYVYIDGKKYRRGYTTGSCATGASKAAVYMLITKNRINTINIDTPKGIPLLLKVDNINISDTFVECSIKKDGGDDIDATHTMDIYARAEIVAKNDKNKGYLTLKDIDSLSTNSECKSELYKFIRVYGGTGIGVVTKKGLSVDVGKPAINPTPLKMINHEIRKLIGDNFESILGNDKVLKITIFAPQGETVAKKTFNPRLGIVGGISIIGTTGIVEPMSDDGWKKSLSIELQMKKEQGLDKIILVPGNHGEQFIREKLNLDIKYVVRVSNFIGYMIKEAQRIGYKKILMAGHIGKFIKVSAGIFNTHSKVADARSEILVANLALMGARYEFLNKINQCVTTEEAVELINNSEYREVYNILSNKCRERVKQYLNEDSDDIDVEVIIFSMDKSLLGKSDNTDDLVEVFI.

Belongs to the CbiD family.

It catalyses the reaction Co-precorrin-5B + S-adenosyl-L-methionine = Co-precorrin-6A + S-adenosyl-L-homocysteine. The protein operates within cofactor biosynthesis; adenosylcobalamin biosynthesis; cob(II)yrinate a,c-diamide from sirohydrochlorin (anaerobic route): step 6/10. In terms of biological role, catalyzes the methylation of C-1 in cobalt-precorrin-5B to form cobalt-precorrin-6A. The sequence is that of Cobalt-precorrin-5B C(1)-methyltransferase from Clostridioides difficile (strain 630) (Peptoclostridium difficile).